The chain runs to 519 residues: MRAMFRTPRMPQRKTAAILVIGDEILKGTTRDTNSHFLCKRLHKLGVNIRKISVIGDDISEISREVQSASGAYDYVITSGGVGPTHDDKTYLGLAHAFTDQMQFSDEIRQAVNRFLPTYTAKKRAEGVGEGLEEAVRLATEKLCTIPKMSQLLWGTQKINGSLSTFPVVRISNVVALPGVPKFCERAFDELQDQLFPIEERQSLCFETLYTDLDEFDFSKKLTDLAAQFEDRNVQIGSYPELKNKFFKTKLTIETESSETMEAVVTSLRELLAGHIVYYDSHAWLDIVTKWKAFKKRKASENQIEFIQKLNEAESIVEEIVEKYPLEQIALSFNGGKDCTVLLHLLRLKVDEKYGPSTPIQGFHIMVEDQFPEATQFIIDAAKFYNIQVLEFPGPLKTGLAALKKTRPSIIPVLMGSRATDPNGKYMKTPVEWTDSDWPQVLRVCPILNWTYTDVWHMLRGLCVPYCKLYDQGYTSLGGRDNTVKHPALRIVSSDGREHYLPAYKLHNDAEERCNRSNI.

The segment at 17 to 108 (AILVIGDEIL…TDQMQFSDEI (92 aa)) is molybdenum cofactor biosynthesis protein-like. Residues 328-485 (QIALSFNGGK…SLGGRDNTVK (158 aa)) are FAD synthase.

In the N-terminal section; belongs to the MoaB/Mog family. It in the C-terminal section; belongs to the PAPS reductase family. FAD1 subfamily. It depends on Mg(2+) as a cofactor.

It catalyses the reaction FMN + ATP + H(+) = FAD + diphosphate. It participates in cofactor biosynthesis; FAD biosynthesis; FAD from FMN: step 1/1. Functionally, catalyzes the adenylation of flavin mononucleotide (FMN) to form flavin adenine dinucleotide (FAD) coenzyme. This Caenorhabditis elegans protein is Probable FAD synthase.